The sequence spans 78 residues: Protein GPR15LG (78 aa).

A signal peptide spans 1-24; it reads MRLLALSGLLCMLLLCFCIFSSEG. Disulfide bonds link Cys-37–Cys-60 and Cys-38–Cys-57.

As to quaternary structure, interacts with SUSD2; the interaction is direct. As to expression, highly abundant in the testis, colon, eye, and tongue. Detected in the epithelial layer of the colon, but not the small intestine.

The protein localises to the secreted. Functionally, highly cationic protein that has multiple functions. Acts as a chemotactic factor that mediates lymphocytes recruitment to epithelia through binding and activation of the G-protein coupled receptor GPR15. May be a tumor suppressor; together with SUSD2 has a growth inhibitory effect on colon cancer cells which includes G1 cell cycle arrest. May regulate keratinocyte proliferation. In addition, through activation of Mas-related G protein-coupled receptors (MRGPRs) contributes to pruritogenesis by activating itch-selective sensory neurons and mast cells degranulation. Its function is as follows. Has antimicrobial activity against Gram-positive bacteria, including Staphylococcus aureus and Actinomyces spec., and Mycoplasma hominis and lentivirus. The protein is Protein GPR15LG (Gpr15lg) of Mus musculus (Mouse).